The sequence spans 454 residues: Probable diacyglycerol O-acyltransferase tgs2 (454 aa).

His-139 serves as the catalytic Proton acceptor.

It belongs to the long-chain O-acyltransferase family.

The catalysed reaction is an acyl-CoA + a 1,2-diacyl-sn-glycerol = a triacyl-sn-glycerol + CoA. It carries out the reaction a long chain fatty alcohol + a fatty acyl-CoA = a wax ester + CoA. The protein operates within glycerolipid metabolism; triacylglycerol biosynthesis. Catalyzes the terminal and only committed step in triacylglycerol synthesis by using diacylglycerol and fatty acyl CoA as substrates. Required for storage lipid synthesis. This chain is Probable diacyglycerol O-acyltransferase tgs2 (tgs2), found in Mycobacterium tuberculosis (strain CDC 1551 / Oshkosh).